The sequence spans 295 residues: GTPase Era (295 aa).

An Era-type G domain is found at 7–176 (KTISVCIIGR…IKSKAKVSPW (170 aa)). A G1 region spans residues 15-22 (GRPNSGKS). Position 15–22 (15–22 (GRPNSGKS)) interacts with GTP. Residues 41–45 (QTTRS) form a G2 region. The G3 stretch occupies residues 62 to 65 (DTPG). Residues 62 to 66 (DTPGI) and 124 to 127 (NKID) contribute to the GTP site. The segment at 124 to 127 (NKID) is G4. The tract at residues 152–154 (ISA) is G5. The KH type-2 domain occupies 204–281 (LQQELPYKLT…HLFLFVKVHA (78 aa)).

The protein belongs to the TRAFAC class TrmE-Era-EngA-EngB-Septin-like GTPase superfamily. Era GTPase family. In terms of assembly, monomer.

The protein resides in the cytoplasm. Its subcellular location is the cell inner membrane. Functionally, an essential GTPase that binds both GDP and GTP, with rapid nucleotide exchange. Plays a role in 16S rRNA processing and 30S ribosomal subunit biogenesis and possibly also in cell cycle regulation and energy metabolism. In Rickettsia prowazekii (strain Madrid E), this protein is GTPase Era.